A 265-amino-acid polypeptide reads, in one-letter code: Phosphonates import ATP-binding protein PhnC (265 aa).

The ABC transporter domain maps to 3–247 (LRLKQAFLHH…MLDTLYANEQ (245 aa)). ATP is bound at residue 36–43 (GPSGAGKS).

This sequence belongs to the ABC transporter superfamily. Phosphonates importer (TC 3.A.1.9.1) family. The complex is composed of two ATP-binding proteins (PhnC), two transmembrane proteins (PhnE) and a solute-binding protein (PhnD).

It is found in the cell inner membrane. The catalysed reaction is phosphonate(out) + ATP + H2O = phosphonate(in) + ADP + phosphate + H(+). Functionally, part of the ABC transporter complex PhnCDE involved in phosphonates import. Responsible for energy coupling to the transport system. The sequence is that of Phosphonates import ATP-binding protein PhnC from Pseudomonas fluorescens (strain Pf0-1).